A 100-amino-acid polypeptide reads, in one-letter code: Putative septation protein SpoVG (100 aa).

It belongs to the SpoVG family.

Functionally, could be involved in septation. This chain is Putative septation protein SpoVG, found in Staphylococcus aureus (strain MRSA252).